A 140-amino-acid polypeptide reads, in one-letter code: Cystatin-C (140 aa).

The first 20 residues, 1-20, serve as a signal peptide directing secretion; sequence MASPLRSLMLLLAVLAVAWA. A Secondary area of contact motif is present at residues 75 to 79; the sequence is QLVAG. 2 disulfides stabilise this stretch: Cys-93–Cys-103 and Cys-117–Cys-137. Asn-99 is a glycosylation site (N-linked (GlcNAc...) asparagine).

It belongs to the cystatin family.

It is found in the secreted. Its function is as follows. As an inhibitor of cysteine proteinases, this protein is thought to serve an important physiological role as a local regulator of this enzyme activity. Known to inhibit cathepsin B, H, and L. In Rattus norvegicus (Rat), this protein is Cystatin-C (Cst3).